The following is a 272-amino-acid chain: Dermonecrotic toxin SpeSicTox-betaIB1b (272 aa).

H5 is an active-site residue. The Mg(2+) site is built by E25 and D27. H41 (nucleophile) is an active-site residue. 2 cysteine pairs are disulfide-bonded: C45–C51 and C47–C191. D85 contributes to the Mg(2+) binding site.

Belongs to the arthropod phospholipase D family. Class II subfamily. Requires Mg(2+) as cofactor. Expressed by the venom gland.

It is found in the secreted. It carries out the reaction an N-(acyl)-sphingosylphosphocholine = an N-(acyl)-sphingosyl-1,3-cyclic phosphate + choline. It catalyses the reaction an N-(acyl)-sphingosylphosphoethanolamine = an N-(acyl)-sphingosyl-1,3-cyclic phosphate + ethanolamine. The catalysed reaction is a 1-acyl-sn-glycero-3-phosphocholine = a 1-acyl-sn-glycero-2,3-cyclic phosphate + choline. The enzyme catalyses a 1-acyl-sn-glycero-3-phosphoethanolamine = a 1-acyl-sn-glycero-2,3-cyclic phosphate + ethanolamine. Its function is as follows. Dermonecrotic toxins cleave the phosphodiester linkage between the phosphate and headgroup of certain phospholipids (sphingolipid and lysolipid substrates), forming an alcohol (often choline) and a cyclic phosphate. This toxin acts on sphingomyelin (SM). It may also act on ceramide phosphoethanolamine (CPE), lysophosphatidylcholine (LPC) and lysophosphatidylethanolamine (LPE), but not on lysophosphatidylserine (LPS), and lysophosphatidylglycerol (LPG). It acts by transphosphatidylation, releasing exclusively cyclic phosphate products as second products. Induces dermonecrosis, hemolysis, increased vascular permeability, edema, inflammatory response, and platelet aggregation. The protein is Dermonecrotic toxin SpeSicTox-betaIB1b of Sicarius peruensis (Six-eyed sand spider).